The following is a 123-amino-acid chain: Large ribosomal subunit protein uL29y (123 aa).

This sequence belongs to the universal ribosomal protein uL29 family.

This Arabidopsis thaliana (Mouse-ear cress) protein is Large ribosomal subunit protein uL29y (RPL35B).